Consider the following 378-residue polypeptide: Succinyl-diaminopimelate desuccinylase (378 aa).

His68 lines the Zn(2+) pocket. Asp70 is a catalytic residue. Asp101 is a Zn(2+) binding site. The active-site Proton acceptor is the Glu135. Residues Glu136, Glu164, and His350 each contribute to the Zn(2+) site.

The protein belongs to the peptidase M20A family. DapE subfamily. In terms of assembly, homodimer. Requires Zn(2+) as cofactor. It depends on Co(2+) as a cofactor.

The enzyme catalyses N-succinyl-(2S,6S)-2,6-diaminopimelate + H2O = (2S,6S)-2,6-diaminopimelate + succinate. It participates in amino-acid biosynthesis; L-lysine biosynthesis via DAP pathway; LL-2,6-diaminopimelate from (S)-tetrahydrodipicolinate (succinylase route): step 3/3. In terms of biological role, catalyzes the hydrolysis of N-succinyl-L,L-diaminopimelic acid (SDAP), forming succinate and LL-2,6-diaminopimelate (DAP), an intermediate involved in the bacterial biosynthesis of lysine and meso-diaminopimelic acid, an essential component of bacterial cell walls. This is Succinyl-diaminopimelate desuccinylase from Vibrio atlanticus (strain LGP32) (Vibrio splendidus (strain Mel32)).